Consider the following 234-residue polypeptide: Sugar fermentation stimulation protein homolog (234 aa).

The protein belongs to the SfsA family.

The polypeptide is Sugar fermentation stimulation protein homolog (Shewanella loihica (strain ATCC BAA-1088 / PV-4)).